The following is a 412-amino-acid chain: MSYIEKKDKVVYDAIQKEFQRQNSNIELIASENFVSQAVMEAQGSVLTNKYAEGYPGRRYYGGCEHVDVTESIAIERAKALFGAEHVNVQPHSGSQANMAVYLVALEMGDTVLGMNLSHGGHLTHGATVNFSGKFYHFVEYGVDQENELINYDEVRRLAIEHQPKLIVAGASAYSRTIDFKKFKEIADEVGAKLMVDMAHIAGLVAAGLHPNPVEYADFVTTTTHKTLRGPRGGMILCKEEYKKDIDKTIFPGIQGGPLEHVIAAKAVAFGEALNDDFKDYQNQVIKNAQALAQTLIEEGFRVVSGGTDNHLVAVDVKGSINMTGKLAEETLDKVGITCNKNTIPFDKEKPFVTSGVRLGTPAATTRGFDESAFVEVAKIISLALNNYDNDTKLNEAKERVHALTSKYPLYN.

(6S)-5,6,7,8-tetrahydrofolate-binding positions include leucine 117 and 121–123; that span reads GHL. Lysine 226 is subject to N6-(pyridoxal phosphate)lysine.

The protein belongs to the SHMT family. In terms of assembly, homodimer. Pyridoxal 5'-phosphate is required as a cofactor.

The protein localises to the cytoplasm. It catalyses the reaction (6R)-5,10-methylene-5,6,7,8-tetrahydrofolate + glycine + H2O = (6S)-5,6,7,8-tetrahydrofolate + L-serine. Its pathway is one-carbon metabolism; tetrahydrofolate interconversion. The protein operates within amino-acid biosynthesis; glycine biosynthesis; glycine from L-serine: step 1/1. Catalyzes the reversible interconversion of serine and glycine with tetrahydrofolate (THF) serving as the one-carbon carrier. This reaction serves as the major source of one-carbon groups required for the biosynthesis of purines, thymidylate, methionine, and other important biomolecules. Also exhibits THF-independent aldolase activity toward beta-hydroxyamino acids, producing glycine and aldehydes, via a retro-aldol mechanism. The polypeptide is Serine hydroxymethyltransferase (Staphylococcus epidermidis (strain ATCC 35984 / DSM 28319 / BCRC 17069 / CCUG 31568 / BM 3577 / RP62A)).